We begin with the raw amino-acid sequence, 441 residues long: AP-2 complex subunit mu (441 aa).

Residues 174 to 440 (RNELFLDVIE…IGRSGLYETR (267 aa)) form the MHD domain.

The protein belongs to the adapter complexes medium subunit family. Adapter protein complex 2 (AP-2) is a heterotetramer composed of two large adaptins (alpha-type subunit and beta-type subunits), a medium adaptin (mu-type subunit AP50) and a small adaptin (sigma-type subunit AP17). As to expression, brain, heart, lung, liver, testis and spleen.

Its subcellular location is the cell membrane. The protein resides in the membrane. It localises to the coated pit. In terms of biological role, component of the adapter complexes which link clathrin to receptors in coated vesicles. Clathrin-associated protein complexes are believed to interact with the cytoplasmic tails of membrane proteins, leading to their selection and concentration. AP50 is a subunit of the plasma membrane adapter. Essential wnt/egl-20 signaling protein that functions in wnt/egl-20-producing cells. Required for the AP-2 complex-mediated endocytosis of membrane proteins including wntless homolog mig-14 in egl-20-producing cells. During development, regulates the migration of HSN neurons and the left and right Q neuroblasts (QL and QR, respectively) and their descendants, possibly through hox gene and wnt/egl-20 gene target mab-5, and plays a role in establishing ALM and PLM neuronal cell polarity. Regulates AWB sensory neuron cilia membrane expansion during development, potentially via localization of tub-1 and PtdIns(4,5)P2 to the ciliary base. Required for the asymmetric divisions of V5 cells. In Caenorhabditis elegans, this protein is AP-2 complex subunit mu (dpy-23).